We begin with the raw amino-acid sequence, 147 residues long: Large ribosomal subunit protein bL9 (147 aa).

The protein belongs to the bacterial ribosomal protein bL9 family.

In terms of biological role, binds to the 23S rRNA. This Campylobacter hominis (strain ATCC BAA-381 / DSM 21671 / CCUG 45161 / LMG 19568 / NCTC 13146 / CH001A) protein is Large ribosomal subunit protein bL9.